The following is a 362-amino-acid chain: Aminomethyltransferase (362 aa).

Belongs to the GcvT family. As to quaternary structure, the glycine cleavage system is composed of four proteins: P, T, L and H.

It carries out the reaction N(6)-[(R)-S(8)-aminomethyldihydrolipoyl]-L-lysyl-[protein] + (6S)-5,6,7,8-tetrahydrofolate = N(6)-[(R)-dihydrolipoyl]-L-lysyl-[protein] + (6R)-5,10-methylene-5,6,7,8-tetrahydrofolate + NH4(+). The glycine cleavage system catalyzes the degradation of glycine. The polypeptide is Aminomethyltransferase (Pseudothermotoga lettingae (strain ATCC BAA-301 / DSM 14385 / NBRC 107922 / TMO) (Thermotoga lettingae)).